We begin with the raw amino-acid sequence, 207 residues long: Recombination protein RecR (207 aa).

A C4-type zinc finger spans residues 60-75; that stretch reads CRHCHNISDSDVCTIC. The region spanning 83–178 is the Toprim domain; that stretch reads STLCVVENIR…RVSVIARGIA (96 aa).

This sequence belongs to the RecR family.

Its function is as follows. May play a role in DNA repair. It seems to be involved in an RecBC-independent recombinational process of DNA repair. It may act with RecF and RecO. This chain is Recombination protein RecR, found in Porphyromonas gingivalis (strain ATCC BAA-308 / W83).